The primary structure comprises 755 residues: Bacteriophytochrome (755 aa).

Residue C24 participates in a tetrapyrrole binding. One can recognise a PAS domain in the interval 26–94 (REPIHIPGSI…LQAALPPGCP (69 aa)). The interval 95 to 504 (DALQYRATLD…RDTLTGALGE (410 aa)) is chromophore binding domain. Positions 152-316 (NLRALAEVAT…YLGRLLSLQV (165 aa)) constitute a GAF domain. Residues 529–747 (VISHHMQEPV…TFRCWLPDAG (219 aa)) enclose the Histidine kinase domain. H532 bears the Phosphohistidine; by autocatalysis mark.

The protein in the N-terminal section; belongs to the phytochrome family. Contains one covalently linked tetrapyrrole chromophore. Lacks the cysteine conserved in plant phytochromes (at the position of Met-259) that binds chromophore. An engineered sequence used for X-ray crystallography forms a thioether link to biliverdin through Cys-24. The natural sequence can bind phycocyanobilin and phytochromobilin in vitro, but the identity of the natural chromophore is unknown.

It catalyses the reaction ATP + protein L-histidine = ADP + protein N-phospho-L-histidine.. Its function is as follows. Photoreceptor which exists in two forms that are reversibly interconvertible by light: the R form that absorbs maximally in the red region of the spectrum and the FR form that absorbs maximally in the far-red region. Also has a slight blue shift for the far-red maximum. Could also absorb green light. May participate in regulating pigment synthesis like the carotenoid deinoxanthin which could protect the bacterium from intense visible light. The protein is Bacteriophytochrome (bphP) of Deinococcus radiodurans (strain ATCC 13939 / DSM 20539 / JCM 16871 / CCUG 27074 / LMG 4051 / NBRC 15346 / NCIMB 9279 / VKM B-1422 / R1).